Here is a 371-residue protein sequence, read N- to C-terminus: Cytochrome b (371 aa).

The next 4 helical transmembrane spans lie at 25–45, 69–90, 105–125, and 170–190; these read FGSM…FLAV, WMMQ…YIHI, WLSG…GYVL, and FFAL…LHIM. Heme b is bound by residues histidine 75 and histidine 89. The heme b site is built by histidine 174 and histidine 188. Histidine 193 serves as a coordination point for a ubiquinone. The next 4 helical transmembrane spans lie at 218–238, 280–300, 312–332, and 339–358; these read YKDL…VSFL, LWGA…PFTH, IMQL…WAAT, and FTMI…IMNP.

Belongs to the cytochrome b family. As to quaternary structure, the cytochrome bc1 complex contains 3 respiratory subunits (MT-CYB, CYC1 and UQCRFS1), 2 core proteins (UQCRC1 and UQCRC2) and probably 6 low-molecular weight proteins. It depends on heme b as a cofactor.

It localises to the mitochondrion inner membrane. Functionally, component of the ubiquinol-cytochrome c reductase complex (complex III or cytochrome b-c1 complex) that is part of the mitochondrial respiratory chain. The b-c1 complex mediates electron transfer from ubiquinol to cytochrome c. Contributes to the generation of a proton gradient across the mitochondrial membrane that is then used for ATP synthesis. The sequence is that of Cytochrome b (MT-CYB) from Eryx miliaris nogaiorum (Black sand boa).